The sequence spans 663 residues: Alcohol oxidase 1 (663 aa).

8-38 (DILVLGGGSSGSCIAGRLANLDHSLKVGLIE) contributes to the FAD binding site. The active-site Proton acceptor is His567. A Microbody targeting signal motif is present at residues 661–663 (ARF).

It belongs to the GMC oxidoreductase family. As to quaternary structure, homooctamer. FAD serves as cofactor.

It is found in the peroxisome matrix. The enzyme catalyses a primary alcohol + O2 = an aldehyde + H2O2. It functions in the pathway energy metabolism; methane degradation. Functionally, major isoform of alcohol oxidase, which catalyzes the oxidation of methanol to formaldehyde and hydrogen peroxide, the first step in the methanol utilization pathway of methylotrophic yeasts. The sequence is that of Alcohol oxidase 1 (AOX1) from Komagataella phaffii (strain ATCC 76273 / CBS 7435 / CECT 11047 / NRRL Y-11430 / Wegner 21-1) (Yeast).